The chain runs to 392 residues: Cytochrome b (392 aa).

4 consecutive transmembrane segments (helical) span residues 38–58 (FGSL…FLAM), 82–104 (WLLR…LHIF), 119–139 (VRCL…TGYV), and 185–205 (FFSL…LHLA). Residues H88 and H102 each contribute to the heme b site. H189 and H203 together coordinate heme b. Position 208 (H208) interacts with a ubiquinone. Helical transmembrane passes span 231–251 (FYVK…IWIF), 295–315 (SGGV…PFFK), 327–347 (IHQG…WIGC), and 354–373 (FVTI…AITP).

This sequence belongs to the cytochrome b family. As to quaternary structure, the main subunits of complex b-c1 are: cytochrome b, cytochrome c1 and the Rieske protein. Heme b is required as a cofactor.

It localises to the mitochondrion inner membrane. In terms of biological role, component of the ubiquinol-cytochrome c reductase complex (complex III or cytochrome b-c1 complex) that is part of the mitochondrial respiratory chain. The b-c1 complex mediates electron transfer from ubiquinol to cytochrome c. Contributes to the generation of a proton gradient across the mitochondrial membrane that is then used for ATP synthesis. The protein is Cytochrome b (MT-CYB) of Pisum sativum (Garden pea).